The chain runs to 110 residues: Large ribosomal subunit protein uL22 (110 aa).

Belongs to the universal ribosomal protein uL22 family. As to quaternary structure, part of the 50S ribosomal subunit.

Functionally, this protein binds specifically to 23S rRNA; its binding is stimulated by other ribosomal proteins, e.g. L4, L17, and L20. It is important during the early stages of 50S assembly. It makes multiple contacts with different domains of the 23S rRNA in the assembled 50S subunit and ribosome. In terms of biological role, the globular domain of the protein is located near the polypeptide exit tunnel on the outside of the subunit, while an extended beta-hairpin is found that lines the wall of the exit tunnel in the center of the 70S ribosome. This chain is Large ribosomal subunit protein uL22, found in Syntrophus aciditrophicus (strain SB).